Consider the following 72-residue polypeptide: UPF0150 protein ssl0738 (72 aa).

Belongs to the UPF0150 family.

This Synechocystis sp. (strain ATCC 27184 / PCC 6803 / Kazusa) protein is UPF0150 protein ssl0738.